The primary structure comprises 294 residues: ATP synthase gamma chain (294 aa).

It belongs to the ATPase gamma chain family. F-type ATPases have 2 components, CF(1) - the catalytic core - and CF(0) - the membrane proton channel. CF(1) has five subunits: alpha(3), beta(3), gamma(1), delta(1), epsilon(1). CF(0) has three main subunits: a, b and c.

It is found in the cell inner membrane. In terms of biological role, produces ATP from ADP in the presence of a proton gradient across the membrane. The gamma chain is believed to be important in regulating ATPase activity and the flow of protons through the CF(0) complex. The protein is ATP synthase gamma chain of Campylobacter jejuni subsp. jejuni serotype O:6 (strain 81116 / NCTC 11828).